The primary structure comprises 122 residues: Large ribosomal subunit protein uL14 (122 aa).

Belongs to the universal ribosomal protein uL14 family. In terms of assembly, part of the 50S ribosomal subunit. Forms a cluster with proteins L3 and L19. In the 70S ribosome, L14 and L19 interact and together make contacts with the 16S rRNA in bridges B5 and B8.

In terms of biological role, binds to 23S rRNA. Forms part of two intersubunit bridges in the 70S ribosome. In Ralstonia nicotianae (strain ATCC BAA-1114 / GMI1000) (Ralstonia solanacearum), this protein is Large ribosomal subunit protein uL14.